Reading from the N-terminus, the 474-residue chain is Hepatocyte nuclear factor 4-alpha (474 aa).

The segment at residues serine 57–asparagine 132 is a DNA-binding region (nuclear receptor). 2 NR C4-type zinc fingers span residues cysteine 60–cysteine 80 and cysteine 96–cysteine 120. Serine 142 and serine 143 each carry phosphoserine. Tyrosine 144 is modified (phosphotyrosine). Residues serine 147–glycine 377 enclose the NR LBD domain. At threonine 166 the chain carries Phosphothreonine. Phosphoserine is present on serine 167. Glycyl lysine isopeptide (Lys-Gly) (interchain with G-Cter in ubiquitin) cross-links involve residues lysine 234 and lysine 307. The residue at position 313 (serine 313) is a Phosphoserine; by AMPK. Residues asparagine 368–glycine 376 carry the 9aaTAD motif. Positions glutamate 419–lysine 447 are disordered. Residues threonine 429 and threonine 432 each carry the phosphothreonine modification. Position 436 is a phosphoserine (serine 436). Lysine 458 is modified (N6-acetyllysine).

It belongs to the nuclear hormone receptor family. NR2 subfamily. In terms of assembly, homodimerization is required for HNF4-alpha to bind to its recognition site. Interacts with CLOCK, BMAL1, CRY1, CRY2, PER1 and PER2. Interacts with NR0B2/SHP; the resulting heterodimer is transcriptionally inactive. Interacts with DDX3X; this interaction disrupts the interaction between HNF4 and NR0B2 that forms inactive heterodimers and enhances the formation of active HNF4 homodimers. Post-translationally, phosphorylated on tyrosine residue(s); phosphorylation is important for its DNA-binding activity. Phosphorylation may directly or indirectly play a regulatory role in the subnuclear distribution. Phosphorylation at Ser-313 by AMPK reduces the ability to form homodimers and bind DNA. Acetylation at Lys-458 lowers transcriptional activation by about two-fold.

The protein resides in the nucleus. Its function is as follows. Transcriptional regulator which controls the expression of hepatic genes during the transition of endodermal cells to hepatic progenitor cells, facilitating the recruitment of RNA pol II to the promoters of target genes. Activates the transcription of CYP2C38. Represses the CLOCK-BMAL1 transcriptional activity and is essential for circadian rhythm maintenance and period regulation in the liver and colon cells. This chain is Hepatocyte nuclear factor 4-alpha (HNF4A), found in Homo sapiens (Human).